A 793-amino-acid polypeptide reads, in one-letter code: Probable exo-1,4-beta-xylosidase xlnD (793 aa).

An N-terminal signal peptide occupies residues 1-20 (MPRVASVAAVLAALLPSALG). Asn-23, Asn-87, and Asn-142 each carry an N-linked (GlcNAc...) asparagine glycan. Asp-310 is an active-site residue. Residues Asn-326, Asn-385, Asn-404, Asn-440, Asn-477, Asn-518, Asn-559, Asn-614, Asn-652, Asn-679, and Asn-701 are each glycosylated (N-linked (GlcNAc...) asparagine).

Belongs to the glycosyl hydrolase 3 family.

Its subcellular location is the secreted. The enzyme catalyses Hydrolysis of (1-&gt;4)-beta-D-xylans, to remove successive D-xylose residues from the non-reducing termini.. The protein operates within glycan degradation; xylan degradation. Xylan 1,4-beta-xylosidase involved in the hydrolysis of xylan, a major structural heterogeneous polysaccharide found in plant biomass representing the second most abundant polysaccharide in the biosphere, after cellulose. This Aspergillus terreus (strain NIH 2624 / FGSC A1156) protein is Probable exo-1,4-beta-xylosidase xlnD (xlnD).